Consider the following 255-residue polypeptide: Type III pantothenate kinase (255 aa).

Residue 6-13 (DVGNSYTM) coordinates ATP. 107-110 (GADR) provides a ligand contact to substrate. Asp-109 (proton acceptor) is an active-site residue. Asp-129 contacts K(+). Position 132 (Thr-132) interacts with ATP. Thr-183 is a binding site for substrate.

This sequence belongs to the type III pantothenate kinase family. As to quaternary structure, homodimer. Requires NH4(+) as cofactor. It depends on K(+) as a cofactor.

It is found in the cytoplasm. The catalysed reaction is (R)-pantothenate + ATP = (R)-4'-phosphopantothenate + ADP + H(+). It functions in the pathway cofactor biosynthesis; coenzyme A biosynthesis; CoA from (R)-pantothenate: step 1/5. Catalyzes the phosphorylation of pantothenate (Pan), the first step in CoA biosynthesis. The sequence is that of Type III pantothenate kinase from Petrotoga mobilis (strain DSM 10674 / SJ95).